Consider the following 255-residue polypeptide: Acetylglutamate kinase (255 aa).

Substrate-binding positions include 40-41, Arg62, and Asn153; that span reads GG.

Belongs to the acetylglutamate kinase family. ArgB subfamily.

It is found in the cytoplasm. The catalysed reaction is N-acetyl-L-glutamate + ATP = N-acetyl-L-glutamyl 5-phosphate + ADP. The protein operates within amino-acid biosynthesis; L-arginine biosynthesis; N(2)-acetyl-L-ornithine from L-glutamate: step 2/4. Its function is as follows. Catalyzes the ATP-dependent phosphorylation of N-acetyl-L-glutamate. The chain is Acetylglutamate kinase from Bacillus mycoides (strain KBAB4) (Bacillus weihenstephanensis).